Here is a 96-residue protein sequence, read N- to C-terminus: Protein YdfX (96 aa).

The chain is Protein YdfX (ydfX) from Escherichia coli (strain K12).